The following is a 126-amino-acid chain: Fluoride-specific ion channel FluC (126 aa).

4 consecutive transmembrane segments (helical) span residues phenylalanine 6–leucine 26, tyrosine 36–phenylalanine 56, leucine 68–valine 88, and isoleucine 99–leucine 119. Positions 76 and 79 each coordinate Na(+).

This sequence belongs to the fluoride channel Fluc/FEX (TC 1.A.43) family.

Its subcellular location is the cell inner membrane. It catalyses the reaction fluoride(in) = fluoride(out). Its activity is regulated as follows. Na(+) is not transported, but it plays an essential structural role and its presence is essential for fluoride channel function. Fluoride-specific ion channel. Important for reducing fluoride concentration in the cell, thus reducing its toxicity. This Ralstonia nicotianae (strain ATCC BAA-1114 / GMI1000) (Ralstonia solanacearum) protein is Fluoride-specific ion channel FluC.